The following is a 149-amino-acid chain: Ribonuclease pancreatic (149 aa).

The N-terminal stretch at methionine 1–glycine 25 is a signal peptide. Positions alanine 30–threonine 49 are disordered. Positions 32 and 35 each coordinate substrate. The active-site Proton acceptor is the histidine 37. Over residues aspartate 39–threonine 49 the composition is skewed to polar residues. 4 disulfide bridges follow: cysteine 51-cysteine 109, cysteine 65-cysteine 120, cysteine 83-cysteine 135, and cysteine 90-cysteine 97. Lysine 66 to threonine 70 contacts substrate. Asparagine 87 carries an N-linked (GlcNAc...) asparagine glycan. Lysine 91 provides a ligand contact to substrate. Histidine 144 (proton donor) is an active-site residue.

It belongs to the pancreatic ribonuclease family. As to quaternary structure, monomer. Interacts with and forms tight 1:1 complexes with RNH1. Dimerization of two such complexes may occur. Interaction with RNH1 inhibits this protein. As to expression, pancreas.

The protein resides in the secreted. The catalysed reaction is an [RNA] containing cytidine + H2O = an [RNA]-3'-cytidine-3'-phosphate + a 5'-hydroxy-ribonucleotide-3'-[RNA].. The enzyme catalyses an [RNA] containing uridine + H2O = an [RNA]-3'-uridine-3'-phosphate + a 5'-hydroxy-ribonucleotide-3'-[RNA].. In terms of biological role, endonuclease that catalyzes the cleavage of RNA on the 3' side of pyrimidine nucleotides. Acts on single-stranded and double-stranded RNA. The protein is Ribonuclease pancreatic (Rnase1) of Mus pahari (Gairdner's shrew-mouse).